Here is a 270-residue protein sequence, read N- to C-terminus: MSIYAVGDLQGCLTPLKRLLEQVRFDPAADQLWLVGDLVNRGPESLEALRFVRDLGDAAITVLGNHDLHLLAIHQGVHKVRRKDTVQPILDAPDRAELMDWLRHRPLLHHDPRIQWTLLHAGLPPQWDLAMARACASEVETVLRGPDHPTLLERMYGDEPDQWSESLQGWARLRFITNCFTRLRYCTADGSVDMAYKGAPGGQLPHLMPWFAVPGRRSVGTRIVFGHWSTLGLYQGDDVLCLDTGCVWGQRMTLARLDSSALETMHTRCE.

The protein belongs to the Ap4A hydrolase family.

It carries out the reaction P(1),P(4)-bis(5'-adenosyl) tetraphosphate + H2O = 2 ADP + 2 H(+). Functionally, hydrolyzes diadenosine 5',5'''-P1,P4-tetraphosphate to yield ADP. The sequence is that of Bis(5'-nucleosyl)-tetraphosphatase, symmetrical from Thioalkalivibrio sulfidiphilus (strain HL-EbGR7).